Consider the following 250-residue polypeptide: Acetylglutamate kinase (250 aa).

Substrate is bound by residues 41 to 42, arginine 63, and asparagine 156; that span reads GG.

This sequence belongs to the acetylglutamate kinase family. ArgB subfamily.

The protein resides in the cytoplasm. The catalysed reaction is N-acetyl-L-glutamate + ATP = N-acetyl-L-glutamyl 5-phosphate + ADP. Its pathway is amino-acid biosynthesis; L-arginine biosynthesis; N(2)-acetyl-L-ornithine from L-glutamate: step 2/4. Functionally, catalyzes the ATP-dependent phosphorylation of N-acetyl-L-glutamate. The sequence is that of Acetylglutamate kinase from Listeria monocytogenes serotype 4a (strain HCC23).